Consider the following 603-residue polypeptide: NADPH-dependent diflavin oxidoreductase 1 (603 aa).

In terms of domain architecture, Flavodoxin-like spans 10 to 155 (VTILYGSETG…YYSEWETNLL (146 aa)). Residues 16–21 (SETGNA), 64–67 (STTG), 102–111 (IGDSSYPKFN), and Glu137 each bind FMN. An FAD-binding FR-type domain is found at 209 to 451 (TNLLLGSVKA…HKSNLKFELP (243 aa)). FAD is bound by residues Arg359, 390 to 393 (RLFS), and 422 to 425 (GLCT). NADP(+)-binding positions include Thr465 and 521–522 (SR). Trp603 contributes to the FAD binding site.

The protein belongs to the NADPH-dependent diflavin oxidoreductase NDOR1 family. In the N-terminal section; belongs to the flavodoxin family. It in the C-terminal section; belongs to the flavoprotein pyridine nucleotide cytochrome reductase family. Interacts with DRE2; as part of the cytosolic iron-sulfur (Fe-S) protein assembly (CIA) machinery. The cofactor is FAD. FMN serves as cofactor.

The protein resides in the cytoplasm. Its subcellular location is the mitochondrion. The catalysed reaction is 2 oxidized [2Fe-2S]-[protein] + NADPH = 2 reduced [2Fe-2S]-[protein] + NADP(+) + H(+). NADPH-dependent reductase which is a central component of the cytosolic iron-sulfur (Fe-S) protein assembly (CIA) machinery. Transfers electrons from NADPH via its FAD and FMN prosthetic groups to the [2Fe-2S] cluster of DRE2, another key component of the CIA machinery. In turn, this reduced cluster provides electrons for assembly of cytosolic iron-sulfur cluster proteins. Positively controls H(2)O(2)-induced cell death. This is NADPH-dependent diflavin oxidoreductase 1 from Debaryomyces hansenii (strain ATCC 36239 / CBS 767 / BCRC 21394 / JCM 1990 / NBRC 0083 / IGC 2968) (Yeast).